A 347-amino-acid polypeptide reads, in one-letter code: Metacaspase-2 (347 aa).

Positions 1-55 are excised as a propeptide; it reads MCSLITQLCDAGQLADYVGLGWLNAVSSQPYLVQALGLQPPPRRVDVDAAFRDAK. The tract at residues 1–70 is regulates substrate access to the active site; it reads MCSLITQLCD…QPWVATPLPG (70 aa). The active site involves His-158. Residues Asp-173, Asp-189, and Asp-190 each coordinate Ca(2+). Cys-213 is a catalytic residue. Residue Asp-220 participates in Ca(2+) binding.

Belongs to the peptidase C14B family. In terms of assembly, monomer. In terms of processing, auto-proteolytic cleavage of the propeptide after Lys-55 and between the large and small subunits after Lys-268 is required for catalytic activity towards large protein substrates but is dispensable towards small oligopeptide substrates. After processing, the propeptide and the large and small subunits remain associated by non-covalent bonds. In vivo, the unprocessed enzyme appears to be the predominant form.

Its subcellular location is the recycling endosome. With respect to regulation, activated by Ca(2+). In response to calcium binding, the 280-loop, a disordered loop consisting of residues 269-275, undergoes a conformational change which stabilizes substrates in the active site. The binding to the substrate triggers the release of the N-terminal region resulting in the activation of the enzyme. Proteolytic cleavage is required for catalytic activity towards large protein substrates. In terms of biological role, cysteine protease that cleaves specifically after arginine or lysine residues. This Trypanosoma brucei brucei (strain 927/4 GUTat10.1) protein is Metacaspase-2.